Here is a 312-residue protein sequence, read N- to C-terminus: Probable deoxyhypusine synthase (312 aa).

The active-site Nucleophile is the Lys-285.

It belongs to the deoxyhypusine synthase family. Requires NAD(+) as cofactor.

The catalysed reaction is [eIF5A protein]-L-lysine + spermidine = [eIF5A protein]-deoxyhypusine + propane-1,3-diamine. It functions in the pathway protein modification; eIF5A hypusination. Its function is as follows. Catalyzes the NAD-dependent oxidative cleavage of spermidine and the subsequent transfer of the butylamine moiety of spermidine to the epsilon-amino group of a specific lysine residue of the eIF-5A precursor protein to form the intermediate deoxyhypusine residue. This Saccharolobus solfataricus (strain ATCC 35092 / DSM 1617 / JCM 11322 / P2) (Sulfolobus solfataricus) protein is Probable deoxyhypusine synthase (dys).